The sequence spans 202 residues: Small ribosomal subunit protein uS4 (202 aa).

Over residues 1–13 (MSRYRGPRLRITR) the composition is skewed to basic residues. The tract at residues 1–43 (MSRYRGPRLRITRRLGDLPGLTRKAAKRSHPPGQHGQARRKRS) is disordered. Residues 90–152 (NRLDNVCFRL…KGSKKLAEAN (63 aa)) form the S4 RNA-binding domain.

The protein belongs to the universal ribosomal protein uS4 family. Part of the 30S ribosomal subunit. Contacts protein S5. The interaction surface between S4 and S5 is involved in control of translational fidelity.

One of the primary rRNA binding proteins, it binds directly to 16S rRNA where it nucleates assembly of the body of the 30S subunit. In terms of biological role, with S5 and S12 plays an important role in translational accuracy. The chain is Small ribosomal subunit protein uS4 from Prochlorococcus marinus (strain MIT 9303).